Consider the following 98-residue polypeptide: NADH-ubiquinone oxidoreductase chain 4L (98 aa).

3 consecutive transmembrane segments (helical) span residues 1–21 (MSVV…GLLV), 30–50 (LLCL…TVLT), and 61–81 (IILL…LVMI).

This sequence belongs to the complex I subunit 4L family. As to quaternary structure, core subunit of respiratory chain NADH dehydrogenase (Complex I) which is composed of 45 different subunits.

It is found in the mitochondrion inner membrane. The catalysed reaction is a ubiquinone + NADH + 5 H(+)(in) = a ubiquinol + NAD(+) + 4 H(+)(out). Core subunit of the mitochondrial membrane respiratory chain NADH dehydrogenase (Complex I) which catalyzes electron transfer from NADH through the respiratory chain, using ubiquinone as an electron acceptor. Part of the enzyme membrane arm which is embedded in the lipid bilayer and involved in proton translocation. The sequence is that of NADH-ubiquinone oxidoreductase chain 4L (MT-ND4L) from Lontra canadensis (North American river otter).